Reading from the N-terminus, the 545-residue chain is ATP synthase subunit alpha (545 aa).

Position 172–179 (172–179 (GDRKTGKT)) interacts with ATP.

It belongs to the ATPase alpha/beta chains family. F-type ATPases have 2 components, CF(1) - the catalytic core - and CF(0) - the membrane proton channel. CF(1) has five subunits: alpha(3), beta(3), gamma(1), delta(1), epsilon(1). CF(0) has three main subunits: a(1), b(2) and c(9-12). The alpha and beta chains form an alternating ring which encloses part of the gamma chain. CF(1) is attached to CF(0) by a central stalk formed by the gamma and epsilon chains, while a peripheral stalk is formed by the delta and b chains.

The protein resides in the cell membrane. The catalysed reaction is ATP + H2O + 4 H(+)(in) = ADP + phosphate + 5 H(+)(out). Its function is as follows. Produces ATP from ADP in the presence of a proton gradient across the membrane. The alpha chain is a regulatory subunit. The protein is ATP synthase subunit alpha of Corynebacterium urealyticum (strain ATCC 43042 / DSM 7109).